Here is a 289-residue protein sequence, read N- to C-terminus: Oxaloacetate decarboxylase (289 aa).

S50 provides a ligand contact to substrate. A Mg(2+)-binding site is contributed by D88. R159 and H235 together coordinate substrate.

This sequence belongs to the isocitrate lyase/PEP mutase superfamily. Oxaloacetate decarboxylase family. In terms of assembly, homotetramer; dimer of dimers. Requires Mg(2+) as cofactor.

The catalysed reaction is oxaloacetate + H(+) = pyruvate + CO2. Functionally, catalyzes the decarboxylation of oxaloacetate into pyruvate. Seems to play a role in maintaining cellular concentrations of bicarbonate and pyruvate. This Pseudomonas syringae pv. tomato (strain ATCC BAA-871 / DC3000) protein is Oxaloacetate decarboxylase.